A 408-amino-acid chain; its full sequence is Argininosuccinate synthase (408 aa).

Residue 14–22 (AYSGGLDTS) participates in ATP binding. Positions 92 and 97 each coordinate L-citrulline. Glycine 122 is a binding site for ATP. Positions 124, 128, and 129 each coordinate L-aspartate. An L-citrulline-binding site is contributed by asparagine 128. Positions 132, 181, 190, 266, and 278 each coordinate L-citrulline.

Belongs to the argininosuccinate synthase family. Type 1 subfamily. Homotetramer.

It localises to the cytoplasm. The catalysed reaction is L-citrulline + L-aspartate + ATP = 2-(N(omega)-L-arginino)succinate + AMP + diphosphate + H(+). The protein operates within amino-acid biosynthesis; L-arginine biosynthesis; L-arginine from L-ornithine and carbamoyl phosphate: step 2/3. This chain is Argininosuccinate synthase, found in Moorella thermoacetica (strain ATCC 39073 / JCM 9320).